Reading from the N-terminus, the 480-residue chain is uncharacterized protein (480 aa).

Residue Lys-222 is modified to N6-(pyridoxal phosphate)lysine.

The protein belongs to the Orn/Lys/Arg decarboxylase class-I family. Pyridoxal 5'-phosphate serves as cofactor.

This is an uncharacterized protein from Bacillus subtilis (strain 168).